Consider the following 94-residue polypeptide: MEAQFIADIYAATAIGVGVILAAAGLGSAIGWGLICSKTLEGIARQPEMRPALMTNMFIFAGLMESFPFIILAFAMWFLFANPFVGAMQAALGA.

Transmembrane regions (helical) follow at residues 15-35 (IGVG…WGLI) and 58-78 (FIFA…AMWF).

It belongs to the ATPase C chain family. As to quaternary structure, F-type ATPases have 2 components, F(1) - the catalytic core - and F(0) - the membrane proton channel. F(1) has five subunits: alpha(3), beta(3), gamma(1), delta(1), epsilon(1). F(0) has three main subunits: a(1), b(2) and c(10-14). The alpha and beta chains form an alternating ring which encloses part of the gamma chain. F(1) is attached to F(0) by a central stalk formed by the gamma and epsilon chains, while a peripheral stalk is formed by the delta and b chains.

It is found in the cell inner membrane. In terms of biological role, f(1)F(0) ATP synthase produces ATP from ADP in the presence of a proton or sodium gradient. F-type ATPases consist of two structural domains, F(1) containing the extramembraneous catalytic core and F(0) containing the membrane proton channel, linked together by a central stalk and a peripheral stalk. During catalysis, ATP synthesis in the catalytic domain of F(1) is coupled via a rotary mechanism of the central stalk subunits to proton translocation. Key component of the F(0) channel; it plays a direct role in translocation across the membrane. A homomeric c-ring of between 10-14 subunits forms the central stalk rotor element with the F(1) delta and epsilon subunits. This is ATP synthase subunit c from Hydrogenovibrio crunogenus (strain DSM 25203 / XCL-2) (Thiomicrospira crunogena).